The chain runs to 338 residues: Phenylalanine--tRNA ligase alpha subunit (338 aa).

Position 253 (glutamate 253) interacts with Mg(2+).

It belongs to the class-II aminoacyl-tRNA synthetase family. Phe-tRNA synthetase alpha subunit type 1 subfamily. In terms of assembly, tetramer of two alpha and two beta subunits. Mg(2+) is required as a cofactor.

The protein localises to the cytoplasm. The catalysed reaction is tRNA(Phe) + L-phenylalanine + ATP = L-phenylalanyl-tRNA(Phe) + AMP + diphosphate + H(+). This Pelobacter propionicus (strain DSM 2379 / NBRC 103807 / OttBd1) protein is Phenylalanine--tRNA ligase alpha subunit.